The primary structure comprises 185 residues: Serine/arginine-rich splicing factor RSZ21A (185 aa).

The 72-residue stretch at 2-73 (ARVYVGNLDP…WRVELSRNAS (72 aa)) folds into the RRM domain. The CCHC-type zinc-finger motif lies at 87-104 (SKCYECGETGHFARECRL). Residues 109–185 (GGLGSGRRRS…YDNGYRRSRS (77 aa)) are disordered. The span at 114–131 (GRRRSRSRSRSRSPRYRR) shows a compositional bias: basic residues. 2 stretches are compositionally biased toward low complexity: residues 132 to 145 (SPSY…PAGR) and 152 to 163 (VSPARARSYSRS).

This sequence belongs to the splicing factor SR family. Post-translationally, extensively phosphorylated on serine residues in the RS domain. In terms of tissue distribution, expressed in roots, leaves and immature seeds.

The protein resides in the nucleus. In terms of biological role, involved in pre-mRNA splicing. This chain is Serine/arginine-rich splicing factor RSZ21A (RSZ21A), found in Oryza sativa subsp. japonica (Rice).